The sequence spans 156 residues: Large ribosomal subunit protein uL22 (156 aa).

The protein belongs to the universal ribosomal protein uL22 family. In terms of assembly, part of the 50S ribosomal subunit.

Functionally, this protein binds specifically to 23S rRNA. It makes multiple contacts with different domains of the 23S rRNA in the assembled 50S subunit and ribosome. Its function is as follows. The globular domain of the protein is located near the polypeptide exit tunnel on the outside of the subunit, while an extended beta-hairpin is found that lines the wall of the exit tunnel in the center of the 70S ribosome. The chain is Large ribosomal subunit protein uL22 from Sulfurisphaera tokodaii (strain DSM 16993 / JCM 10545 / NBRC 100140 / 7) (Sulfolobus tokodaii).